The chain runs to 122 residues: 5'-AMP-activated protein kinase subunit beta-1 (122 aa).

Phosphoserine occurs at positions 5, 61, 66, and 73. A glycogen-binding domain region spans residues 33 to 122 (EVNDKASAQA…TVNNIIQVKK (90 aa)). Threonine 113 carries the post-translational modification Phosphothreonine.

Belongs to the 5'-AMP-activated protein kinase beta subunit family. AMPK is a heterotrimer of an alpha catalytic subunit (PRKAA1 or PRKAA2), a beta (PRKAB1 or PRKAB2) and a gamma non-catalytic subunits (PRKAG1, PRKAG2 or PRKAG3). Interacts with FNIP1 and FNIP2. Post-translationally, phosphorylated when associated with the catalytic subunit (PRKAA1 or PRKAA2). Phosphorylated by ULK1; leading to negatively regulate AMPK activity and suggesting the existence of a regulatory feedback loop between ULK1 and AMPK.

Functionally, non-catalytic subunit of AMP-activated protein kinase (AMPK), an energy sensor protein kinase that plays a key role in regulating cellular energy metabolism. In response to reduction of intracellular ATP levels, AMPK activates energy-producing pathways and inhibits energy-consuming processes: inhibits protein, carbohydrate and lipid biosynthesis, as well as cell growth and proliferation. AMPK acts via direct phosphorylation of metabolic enzymes, and by longer-term effects via phosphorylation of transcription regulators. Also acts as a regulator of cellular polarity by remodeling the actin cytoskeleton; probably by indirectly activating myosin. Beta non-catalytic subunit acts as a scaffold on which the AMPK complex assembles, via its C-terminus that bridges alpha (PRKAA1 or PRKAA2) and gamma subunits (PRKAG1, PRKAG2 or PRKAG3). This is 5'-AMP-activated protein kinase subunit beta-1 (PRKAB1) from Sus scrofa (Pig).